The sequence spans 185 residues: MFAVKHCLLVVAVGALVNVSVRAAEFSGVVNQGPVDVPFSGKPLDERAVGGKGEHTPPLPDERQQEPEEPVSQRASRVAEQLFRKFLKFAENVGHHSEKAFKKAKVVAEKGFTAAKTHTVRGFKVAKEAAGRGMVTVGKKLANVESDRSTTTTQAPDSPNGLAETEVPVEPQQRAAHVPVPDFSQ.

Positions M1–A23 are cleaved as a signal peptide. N18 carries an N-linked (GlcNAc...) asparagine glycan. 2 disordered regions span residues G41–A75 and A142–Q185. Residues P43 to E66 are compositionally biased toward basic and acidic residues.

Post-translationally, may also be O-glycosylated. The N-terminus is blocked.

It is found in the parasitophorous vacuole. Its function is as follows. Major granular component involved in excreted-secreted antigen (ESA) immunity. Possibly acts in conjunction with GRA1. In Toxoplasma gondii, this protein is Dense granule protein 2 (GRA2).